The primary structure comprises 285 residues: Enterobactin synthase component B (285 aa).

Residues 2 to 213 (AIPKLQAYAL…EELLPAPIPA (212 aa)) are isochorismatase. The 76-residue stretch at 209–284 (APIPASKAAL…AWWKLLSREV (76 aa)) folds into the Carrier domain. Mg(2+)-binding residues include D227, G242, and D244. S245 carries the post-translational modification O-(pantetheine 4'-phosphoryl)serine.

In the N-terminal section; belongs to the isochorismatase family. As to quaternary structure, proteins EntB, EntD, EntE, and EntF form a multienzyme complex called enterobactin synthase. Homodimer. Also forms a specific pairwise interaction with EntC; this interaction likely facilitates substrate channeling to connect the EntB and EntC active sites. The cofactor is Mg(2+). In terms of processing, 4'-phosphopantetheine is transferred from CoA to a specific serine of apo-EntB by EntD. Holo-EntB so formed is then acylated with 2,3-dihydroxybenzoate in a reaction catalyzed by EntE.

Its subcellular location is the cytoplasm. It catalyses the reaction 3 2,3-dihydroxybenzoate + 3 L-serine + 6 ATP = enterobactin + 6 AMP + 6 diphosphate + 4 H(+). The enzyme catalyses isochorismate + H2O = (2S,3S)-2,3-dihydroxy-2,3-dihydrobenzoate + pyruvate. It participates in siderophore biosynthesis; enterobactin biosynthesis. In terms of biological role, involved in the biosynthesis of the siderophore enterobactin (enterochelin), which is a macrocyclic trimeric lactone of N-(2,3-dihydroxybenzoyl)-serine. The serine trilactone serves as a scaffolding for the three catechol functionalities that provide hexadentate coordination for the tightly ligated iron(3+) atoms. EntB is a bifunctional protein that serves as an isochorismate lyase and an aryl carrier protein (ArCP). Catalyzes the conversion of isochorismate to 2,3-dihydro-2,3-dihydroxybenzoate (2,3-diDHB), the precursor of 2,3-dihydroxybenzoate (DHB). In the enterobactin assembly, EntB functions as an aryl carrier protein phosphopantetheinylated near the C terminus by EntD to yield holo-EntB, which is then acylated by EntE with 2,3-dihydroxybenzoyl-AMP to form DHB-holo-EntB. Then this product will serve in the formation of the amide bond between 2,3-dihydroxybenzoate (DHB) and L-serine. This is Enterobactin synthase component B from Escherichia coli O157:H7.